A 357-amino-acid chain; its full sequence is 3-isopropylmalate dehydrogenase (357 aa).

Position 76-89 (76-89 (GPQWDTIDPSLRPE)) interacts with NAD(+). Substrate is bound by residues R96, R106, R134, and D224. 3 residues coordinate Mg(2+): D224, D248, and D252. 282-294 (GSAPDIAGKGIAN) serves as a coordination point for NAD(+).

This sequence belongs to the isocitrate and isopropylmalate dehydrogenases family. LeuB type 1 subfamily. Homodimer. Mg(2+) is required as a cofactor. The cofactor is Mn(2+).

The protein resides in the cytoplasm. The enzyme catalyses (2R,3S)-3-isopropylmalate + NAD(+) = 4-methyl-2-oxopentanoate + CO2 + NADH. The protein operates within amino-acid biosynthesis; L-leucine biosynthesis; L-leucine from 3-methyl-2-oxobutanoate: step 3/4. Its function is as follows. Catalyzes the oxidation of 3-carboxy-2-hydroxy-4-methylpentanoate (3-isopropylmalate) to 3-carboxy-4-methyl-2-oxopentanoate. The product decarboxylates to 4-methyl-2 oxopentanoate. This chain is 3-isopropylmalate dehydrogenase, found in Xanthomonas euvesicatoria pv. vesicatoria (strain 85-10) (Xanthomonas campestris pv. vesicatoria).